The following is a 357-amino-acid chain: Hyaluronidase (357 aa).

Residues 1-26 (MLLVTLFLFFLQALVNGDSCGSNCEK) form the signal peptide. 2 disulfides stabilise this stretch: Cys45–Cys334 and Cys211–Cys223. 2 N-linked (GlcNAc...) asparagine glycosylation sites follow: Asn105 and Asn125. Glu135 serves as the catalytic Proton donor. Residue Asn153 is glycosylated (N-linked (GlcNAc...) asparagine). Residue Asn351 is glycosylated (N-linked (GlcNAc...) asparagine).

Belongs to the glycosyl hydrolase 56 family.

The protein resides in the secreted. It carries out the reaction Random hydrolysis of (1-&gt;4)-linkages between N-acetyl-beta-D-glucosamine and D-glucuronate residues in hyaluronate.. In terms of biological role, hydrolyzes high molecular weight hyaluronic acid to produce small oligosaccharides. This chain is Hyaluronidase, found in Vespa magnifica (Hornet).